The primary structure comprises 299 residues: Ethylmalonyl-CoA decarboxylase (299 aa).

Lysine 209 bears the N6-acetyllysine; alternate mark. Lysine 209 bears the N6-succinyllysine; alternate mark. Lysine 293 carries the N6-succinyllysine modification.

The protein belongs to the enoyl-CoA hydratase/isomerase family.

The protein localises to the cytoplasm. The protein resides in the cytosol. It catalyses the reaction (2S)-ethylmalonyl-CoA + H(+) = butanoyl-CoA + CO2. The catalysed reaction is (S)-methylmalonyl-CoA + H(+) = propanoyl-CoA + CO2. It carries out the reaction (2R)-ethylmalonyl-CoA + H(+) = butanoyl-CoA + CO2. In terms of biological role, decarboxylates ethylmalonyl-CoA, a potentially toxic metabolite, to form butyryl-CoA, suggesting it might be involved in metabolite proofreading. Acts preferentially on (S)-ethylmalonyl-CoA but also has some activity on the (R)-isomer. Also has methylmalonyl-CoA decarboxylase activity at lower level. The protein is Ethylmalonyl-CoA decarboxylase (Echdc1) of Rattus norvegicus (Rat).